A 321-amino-acid chain; its full sequence is Acetylglutamate kinase (321 aa).

Residues 88-89, Arg-110, and Asn-216 each bind substrate; that span reads GG.

The protein belongs to the acetylglutamate kinase family. ArgB subfamily.

It is found in the cytoplasm. It catalyses the reaction N-acetyl-L-glutamate + ATP = N-acetyl-L-glutamyl 5-phosphate + ADP. It participates in amino-acid biosynthesis; L-arginine biosynthesis; N(2)-acetyl-L-ornithine from L-glutamate: step 2/4. Functionally, catalyzes the ATP-dependent phosphorylation of N-acetyl-L-glutamate. The polypeptide is Acetylglutamate kinase (Ehrlichia chaffeensis (strain ATCC CRL-10679 / Arkansas)).